The following is a 30-amino-acid chain: Glucagon-like peptide (30 aa).

Residue Arg-30 is modified to Arginine amide.

The protein belongs to the glucagon family.

Its subcellular location is the secreted. The chain is Glucagon-like peptide from Anguilla anguilla (European freshwater eel).